The chain runs to 154 residues: UPF0178 protein GDI0551/Gdia_1457 (154 aa).

Belongs to the UPF0178 family.

The polypeptide is UPF0178 protein GDI0551/Gdia_1457 (Gluconacetobacter diazotrophicus (strain ATCC 49037 / DSM 5601 / CCUG 37298 / CIP 103539 / LMG 7603 / PAl5)).